A 120-amino-acid chain; its full sequence is Large ribosomal subunit protein uL22 (120 aa).

The protein belongs to the universal ribosomal protein uL22 family. Part of the 50S ribosomal subunit.

In terms of biological role, this protein binds specifically to 23S rRNA; its binding is stimulated by other ribosomal proteins, e.g. L4, L17, and L20. It is important during the early stages of 50S assembly. It makes multiple contacts with different domains of the 23S rRNA in the assembled 50S subunit and ribosome. Its function is as follows. The globular domain of the protein is located near the polypeptide exit tunnel on the outside of the subunit, while an extended beta-hairpin is found that lines the wall of the exit tunnel in the center of the 70S ribosome. The polypeptide is Large ribosomal subunit protein uL22 (Crocosphaera subtropica (strain ATCC 51142 / BH68) (Cyanothece sp. (strain ATCC 51142))).